The chain runs to 1044 residues: Translation initiation factor IF-2 (1044 aa).

Residues 55–458 are disordered; the sequence is EAQEGQGAGK…KRKASAQERR (404 aa). Low complexity predominate over residues 57 to 77; the sequence is QEGQGAGKSAAKSAKPAAQPK. The segment covering 104 to 146 has biased composition (basic and acidic residues); that stretch reads LSEKRERRPLTERRPLAERRPLAERPLVDRPVTERPLAERPAA. Low complexity-rich tracts occupy residues 147–168, 190–231, and 254–265; these read ELRPGAAKAAAPARPAAEAQPV, KAQP…QKPA, and ASSRPASAAPAA. The span at 267–281 shows a compositional bias: basic and acidic residues; that stretch reads GEKRPAAAAERREEP. 2 stretches are compositionally biased toward low complexity: residues 352–375 and 383–395; these read AAGQGTAARAGGLGLPQKPKAGAP and APQRPGRRGAPLA. The segment covering 399–444 has biased composition (basic and acidic residues); that stretch reads LDPKVAEQAKAGEGKPRYGQSGDKRRADLYDRREHPSSQPSEEKLF. The tr-type G domain occupies 546 to 714; it reads PRHPVVTIMG…ILVLAEVSDL (169 aa). The interval 555–562 is G1; the sequence is GHVDHGKT. 555 to 562 serves as a coordination point for GTP; that stretch reads GHVDHGKT. Positions 580–584 are G2; it reads GITQH. A G3 region spans residues 601–604; it reads DTPG. GTP is bound by residues 601-605 and 655-658; these read DTPGH and NKID. The G4 stretch occupies residues 655–658; that stretch reads NKID. The tract at residues 691-693 is G5; that stretch reads SAK.

Belongs to the TRAFAC class translation factor GTPase superfamily. Classic translation factor GTPase family. IF-2 subfamily.

It localises to the cytoplasm. Functionally, one of the essential components for the initiation of protein synthesis. Protects formylmethionyl-tRNA from spontaneous hydrolysis and promotes its binding to the 30S ribosomal subunits. Also involved in the hydrolysis of GTP during the formation of the 70S ribosomal complex. The chain is Translation initiation factor IF-2 from Symbiobacterium thermophilum (strain DSM 24528 / JCM 14929 / IAM 14863 / T).